The following is a 102-amino-acid chain: Keratinocyte differentiation-associated protein (102 aa).

The first 22 residues, 1-22, serve as a signal peptide directing secretion; sequence MKIPILPVVALLSLLALHAVQG.

Expression restricted to suprabasal keratinocytes of the epidermis.

The protein localises to the secreted. Functionally, may act as a soluble regulator of keratinocyte differentiation. May play an important role in embryonic skin morphogenesis. In Mus musculus (Mouse), this protein is Keratinocyte differentiation-associated protein.